The chain runs to 338 residues: Trace amine-associated receptor 1 (338 aa).

At 1-24 the chain is on the extracellular side; sequence MPFCHNIINISCVKNNWSNDVRAS. Disulfide bonds link Cys-4–Cys-177, Cys-12–Cys-87, and Cys-95–Cys-181. Residues Asn-9 and Asn-16 are each glycosylated (N-linked (GlcNAc...) asparagine). A helical membrane pass occupies residues 25 to 45; that stretch reads LYSLMALIILTTLVGNLIVIV. Over 46–58 the chain is Cytoplasmic; sequence SISHFKQLHTPTN. Residues 59-79 form a helical membrane-spanning segment; sequence WLIHSMATVDFLLGCLVMPYS. At 80–97 the chain is on the extracellular side; it reads MVRSAEHCWYFGEVFCKI. Residues 98-118 traverse the membrane as a helical segment; it reads HTSTDIMLSSASIFHLSFISI. Position 102 (Asp-102) interacts with 2-phenylethylamine. Topologically, residues 119–135 are cytoplasmic; sequence DRYYAVCDPLRYKAKIN. A helical transmembrane segment spans residues 136–156; the sequence is ILVVCVMIFISWSVPAVFAFG. The Extracellular portion of the chain corresponds to 157 to 187; that stretch reads MIFLELNFKGAEEIYYKHVHCRGGCSVFFSK. A helical membrane pass occupies residues 188 to 208; the sequence is ISGVLAFMTSFYIPGSIMLCI. At 209–251 the chain is on the cytoplasmic side; it reads YYRIYLIAKEQARSINDANQKLQIGLEMKNGISQSKERKAVKT. The chain crosses the membrane as a helical span at residues 252 to 272; it reads LGIVMGVFLICWCPFFVCTVI. At 273 to 286 the chain is on the extracellular side; it reads DPFLHYTIPPTLND. The chain crosses the membrane as a helical span at residues 287–307; the sequence is VLIWFGYLNSTFNPMVYAFFY. Residues 308–338 are Cytoplasmic-facing; the sequence is PWFRKALKMILFGKIFQKDSSRCKLFLESSS.

Belongs to the G-protein coupled receptor 1 family.

The protein resides in the endomembrane system. Its subcellular location is the endoplasmic reticulum membrane. It localises to the cell membrane. Its function is as follows. Intracellular G-protein coupled receptor for trace amines, which recognizes endogenous amine-containing metabolites such as beta-phenylethylamine (beta-PEA), 3-iodothyronamine (T1AM), isoamylamine (IAA), cadaverine (CAD), cyclohexylamine (CHA), p-tyramine (p-TYR), trimethylamine (TMA), octopamine and tryptamine. Also functions as a receptor for various drugs and psychoactive substances, such as amphetamine and methamphetamine. Unresponsive to classical biogenic amines, such as epinephrine and histamine and only partially activated by dopamine and serotonin. Expressed in both the central and peripheral nervous system: TAAR1 activation regulates the activity of several neurotransmitter signaling pathways by (1) decreasing the basal firing rates of the neurons involved and by (2) lowering the sensitivity of receptors to neurotransmitters. Ligand binding causes a conformation change that triggers signaling via guanine nucleotide-binding proteins (G proteins) and modulates the activity of downstream effectors. TAAR1 is coupled with different G(i)/G(o)-, G(s)- or G(q)/G(11) classes of G alpha proteins depending on the ligand. CAD-binding is coupled to G(i)/G(o) G alpha proteins and mediates inhibition of adenylate cyclase activity. T1AM- or beta-PEA-binding is coupled to G(s) G alpha proteins and mediates activation of adenylate cyclase activity. CHA- or IAA-binding is coupled to G(q)/G(11) G alpha proteins and activates phospholipase C-beta, releasing diacylglycerol (DAG) and inositol 1,4,5-trisphosphate (IP3) second messengers. TMA-binding is coupled with all three G(i)/G(o)-, G(s)- or G(q)/G(11) G alpha protein subtypes. In Macaca mulatta (Rhesus macaque), this protein is Trace amine-associated receptor 1 (TAAR1).